A 720-amino-acid chain; its full sequence is Long chain acyl-CoA synthetase 8 (720 aa).

Met1 carries the N-acetylmethionine modification. 279–290 (IMFTSGSTGLPK) provides a ligand contact to ATP. The fatty acid-binding stretch occupies residues 554–582 (DEKGTRWFYTGDIGRFHPDGCLEVIDRKK).

This sequence belongs to the ATP-dependent AMP-binding enzyme family. Mg(2+) is required as a cofactor.

It carries out the reaction a long-chain fatty acid + ATP + CoA = a long-chain fatty acyl-CoA + AMP + diphosphate. It functions in the pathway lipid metabolism; fatty acid metabolism. Activation of long-chain fatty acids for both synthesis of cellular lipids, and degradation via beta-oxidation. Preferentially uses palmitate, palmitoleate, oleate and linoleate. The polypeptide is Long chain acyl-CoA synthetase 8 (LACS8) (Arabidopsis thaliana (Mouse-ear cress)).